A 354-amino-acid polypeptide reads, in one-letter code: tRNA N6-adenosine threonylcarbamoyltransferase (354 aa).

Histidine 121, histidine 125, and tyrosine 142 together coordinate a divalent metal cation. Substrate is bound by residues tyrosine 142–glycine 146, aspartate 174, glycine 189, glutamate 193, and asparagine 285. A divalent metal cation is bound at residue aspartate 313.

It belongs to the KAE1 / TsaD family. Component of the EKC/KEOPS complex composed of at least bud32, cgi121, gon7, kae1 and pcc1; the whole complex dimerizes. Requires a divalent metal cation as cofactor.

It is found in the cytoplasm. The protein localises to the nucleus. The enzyme catalyses L-threonylcarbamoyladenylate + adenosine(37) in tRNA = N(6)-L-threonylcarbamoyladenosine(37) in tRNA + AMP + H(+). Functionally, component of the EKC/KEOPS complex that is required for the formation of a threonylcarbamoyl group on adenosine at position 37 (t(6)A37) in tRNAs that read codons beginning with adenine. The complex is probably involved in the transfer of the threonylcarbamoyl moiety of threonylcarbamoyl-AMP (TC-AMP) to the N6 group of A37. Kae1 likely plays a direct catalytic role in this reaction, but requires other protein(s) of the complex to fulfill this activity. The EKC/KEOPS complex also promotes both telomere uncapping and telomere elongation. The complex is required for efficient recruitment of transcriptional coactivators. In Neurospora crassa (strain ATCC 24698 / 74-OR23-1A / CBS 708.71 / DSM 1257 / FGSC 987), this protein is tRNA N6-adenosine threonylcarbamoyltransferase (gpe-1).